Here is a 722-residue protein sequence, read N- to C-terminus: NCK-interacting protein with SH3 domain (722 aa).

In terms of domain architecture, SH3 spans 1–58 (MYRALYAFRSAEPNALAFAAGETFLVLERSSAHWWLAARARSGETGYVPPAYLRRLQG). Disordered regions lie at residues 101–122 (KETL…SSTS) and 149–286 (PSSE…ASDD). A compositionally biased stretch (low complexity) spans 110–121 (SASSVAVMTSST). Residue S120 is modified to Phosphoserine. The segment covering 169 to 185 (QIPPQPRRAAPTTPPPP) has biased composition (pro residues). Positions 175–192 (RRAAPTTPPPPVKRRDRE) match the Nuclear localization signal motif. T181 carries the phosphothreonine modification. Residues 206-240 (PSGGNSVSSGSSVSSTSLDTLYTSSSPSEPGSSCS) show a composition bias toward low complexity. Phosphoserine is present on S294.

Associates with the intermediate filaments, vimentin and desmin. Binds the first and third SH3 domains of NCK. Binds the proline-rich domains of N-WASP through its SH3 domain. Similarly, binds diaphanous protein homolog 1 (DRF1). Binds the SH3 domains of GRB2 through its proline-rich domains. Interacts with Helicobacter pylori toxin vacA. Isoform 4 interacts with FHOD1. Interacts with FASLG. Interacts with TMIGD2. Highest expression in heart, brain, skeletal muscle, kidney and liver. Lower levels in placenta, lung, small intestine and leukocytes. Weak expression in colon, thymus and spleen.

Its subcellular location is the nucleus. Its function is as follows. Has an important role in stress fiber formation induced by active diaphanous protein homolog 1 (DRF1). Induces microspike formation, in vivo. In vitro, stimulates N-WASP-induced ARP2/3 complex activation in the absence of CDC42. May play an important role in the maintenance of sarcomeres and/or in the assembly of myofibrils into sarcomeres. Implicated in regulation of actin polymerization and cell adhesion. Plays a role in angiogenesis. The chain is NCK-interacting protein with SH3 domain (NCKIPSD) from Homo sapiens (Human).